Reading from the N-terminus, the 148-residue chain is Calcium-permeable cation-selective channel WeiTsing (148 aa).

Over 1–25 (METVSAVNQTLPISGGEPVKFTTYS) the chain is Cytoplasmic. A helical membrane pass occupies residues 26–46 (AAVHKVLVMINAGILGLLQLV). At 47–51 (SQQSS) the chain is on the lumenal side. The chain crosses the membrane as a helical span at residues 52 to 72 (VLETHKAAFLCFCVFILFYAV). The Cytoplasmic segment spans residues 73–90 (LRVREAMDVRLQPGLVPR). The helical transmembrane segment at 91–110 (LIGHGSHLFGGLAALVLVSV) threads the bilayer. Over 111 to 116 (VSTAFS) the chain is Lumenal. The helical transmembrane segment at 117-133 (IVLFLLWFIWLSAVVYL) threads the bilayer. The Cytoplasmic portion of the chain corresponds to 134-148 (ETNKPSACPPQLPPV).

Forms pentamers with a central pore to produce an ion channel.

Its subcellular location is the endoplasmic reticulum membrane. The enzyme catalyses Ca(2+)(in) = Ca(2+)(out). It catalyses the reaction Na(+)(in) = Na(+)(out). Functionally, calcium-permeable cation-selective channel conferring a broad-spectrum clubroot resistance by supporting cytosolic Ca(2+) increase in root pericycle cells. Triggers immunity toward fungal pathogens such as Plasmodiophora brassicae (Pb) and induces defenses. Also permeable to sodium ion Na(+) and possibly other cations. The chain is Calcium-permeable cation-selective channel WeiTsing from Arabidopsis thaliana (Mouse-ear cress).